The chain runs to 310 residues: MSGGLDILQLKEEDVVKFLAAGVHLGANNCDFQMEDYVYKRKSDGVNIINVKKTWEKLLLAARIIVTIENPADVCVISARPYGQRAILKYASHTGATPIAGRFTPGTFTNQIQAAFREPRLLIVCDPRIDHQPVTEASYVNIPVIAFCNTDSPLRHVDVAIPCNNKGIHSIGLMFWLLAREVLRMRGSISRALPWEIMPDLYFYRDPEEAEKEEQAALARQQEEANAGTTAGFSEWGGAAPWGADPMATAGIAPTIPAPFAATTPAVSADWDSVAPGATDDWGAEPAAPSSDWGTAVTMQEQAKPSTDWA.

2 disordered regions span residues 213–240 and 271–310; these read EEQA…GGAA and WDSV…TDWA. Positions 216–227 are enriched in low complexity; that stretch reads AALARQQEEANA. Over residues 297–310 the composition is skewed to polar residues; it reads VTMQEQAKPSTDWA.

The protein belongs to the universal ribosomal protein uS2 family. As to quaternary structure, component of the small ribosomal subunit. Mature ribosomes consist of a small (40S) and a large (60S) subunit. The 40S subunit contains about 33 different proteins and 1 molecule of RNA (18S). The 60S subunit contains about 49 different proteins and 3 molecules of RNA (28S, 5.8S and 5S). Interacts with ribosomal protein S21.

Its subcellular location is the cytoplasm. In terms of biological role, required for the assembly and/or stability of the 40S ribosomal subunit. Required for the processing of the 20S rRNA-precursor to mature 18S rRNA in a late step of the maturation of 40S ribosomal subunits. The polypeptide is Small ribosomal subunit protein uS2 (Nematostella vectensis (Starlet sea anemone)).